A 100-amino-acid chain; its full sequence is Large ribosomal subunit protein bL21 (100 aa).

It belongs to the bacterial ribosomal protein bL21 family. In terms of assembly, part of the 50S ribosomal subunit. Contacts protein L20.

Functionally, this protein binds to 23S rRNA in the presence of protein L20. This Mycoplasma capricolum subsp. capricolum (strain California kid / ATCC 27343 / NCTC 10154) protein is Large ribosomal subunit protein bL21.